The primary structure comprises 90 residues: Small ribosomal subunit protein bS20 (90 aa).

It belongs to the bacterial ribosomal protein bS20 family.

Its function is as follows. Binds directly to 16S ribosomal RNA. In Acidiphilium cryptum (strain JF-5), this protein is Small ribosomal subunit protein bS20.